The chain runs to 205 residues: MEEKISQAIDDPNVFCFQELWIECQEVQKSQPIDSAVLRTLEIFCRGDIRDASSEWNELRFKKLRLLTLIDLANRHVGSSVSFETILVHLQLDRLPPSDPTFTVEYYIMQAMMNQILVGKINAKTQTLHVSWALERFLDSKRIDEMKYSLDRFIERCSNILFQLDAGTPSVSKSFKRASRMSSSDGIDYMVFDKRPRPDDTDFDL.

The PCI domain occupies 1–135 (MEEKISQAID…QTLHVSWALE (135 aa)). Ser-183 is modified (phosphoserine).

It belongs to the CSN7/EIF3M family. CSN7 subfamily. Component of the COP9 signalosome (CSN) complex.

In terms of biological role, component of the COP9 signalosome (CSN) complex that acts as an regulator of the ubiquitin (Ubl) conjugation pathway by mediating the deneddylation of the cullin subunit of SCF-type E3 ubiquitin-protein ligase complexes. The polypeptide is COP9 signalosome complex subunit 7 (csn71) (Schizosaccharomyces pombe (strain 972 / ATCC 24843) (Fission yeast)).